A 398-amino-acid chain; its full sequence is Interleukin-1 receptor type 2 (398 aa).

The signal sequence occupies residues 1–13 (MLRLYVLVMGVSA). At 14–343 (FTLQPAAHTG…FQTLRTTVKE (330 aa)) the chain is on the extracellular side. Ig-like C2-type domains lie at 18–124 (PAAH…IELR), 134–223 (PFIS…ITRS), and 237–349 (PVII…STFS). Disulfide bonds link cysteine 28–cysteine 116, cysteine 50–cysteine 108, and cysteine 152–cysteine 207. 3 N-linked (GlcNAc...) asparagine glycosylation sites follow: asparagine 66, asparagine 72, and asparagine 112. N-linked (GlcNAc...) asparagine glycans are attached at residues asparagine 219 and asparagine 277. Cysteine 258 and cysteine 326 are oxidised to a cystine. The tract at residues 329-343 (HNTLSFQTLRTTVKE) is contains proteolytic cleavage site. Residues 344-369 (ASSTFSWGIVLAPLSLAFLVLGGIWM) traverse the membrane as a helical segment. Residues 370 to 398 (HRRCKHRTGKADGLTVLWPHHQDFQSYPK) lie on the Cytoplasmic side of the membrane.

The protein belongs to the interleukin-1 receptor family. As to quaternary structure, associates with IL1RAP to form a non-signaling interleukin-1 receptor complex. In terms of processing, a soluble form (sIL1R2) can also be produced by proteolytic cleavage at the cell surface (shedding) involving a metalloproteinase; hovever, several sIL1R2 forms ranging from 45 and 60 kDa are reported.

It is found in the secreted. The protein localises to the cell membrane. Non-signaling receptor for IL1A, IL1B and IL1RN. Reduces IL1B activities. Serves as a decoy receptor by competitive binding to IL1B and preventing its binding to IL1R1. Also modulates cellular response through non-signaling association with IL1RAP after binding to IL1B. IL1R2 (membrane and secreted forms) preferentially binds IL1B and poorly IL1A and IL1RN. The secreted IL1R2 recruits secreted IL1RAP with high affinity; this complex formation may be the dominant mechanism for neutralization of IL1B by secreted/soluble receptors. The polypeptide is Interleukin-1 receptor type 2 (IL1R2) (Homo sapiens (Human)).